A 163-amino-acid polypeptide reads, in one-letter code: Small ribosomal subunit protein uS5 (163 aa).

One can recognise an S5 DRBM domain in the interval 8–71 (LVEKIVYLNR…ERAKKDMVQI (64 aa)).

It belongs to the universal ribosomal protein uS5 family. In terms of assembly, part of the 30S ribosomal subunit. Contacts proteins S4 and S8.

With S4 and S12 plays an important role in translational accuracy. Its function is as follows. Located at the back of the 30S subunit body where it stabilizes the conformation of the head with respect to the body. The sequence is that of Small ribosomal subunit protein uS5 from Nitratidesulfovibrio vulgaris (strain DSM 19637 / Miyazaki F) (Desulfovibrio vulgaris).